Here is a 324-residue protein sequence, read N- to C-terminus: Glyoxylate/hydroxypyruvate reductase B (324 aa).

Active-site residues include Arg237 and Glu266. Catalysis depends on His285, which acts as the Proton donor.

Belongs to the D-isomer specific 2-hydroxyacid dehydrogenase family. GhrB subfamily. In terms of assembly, homodimer.

Its subcellular location is the cytoplasm. The enzyme catalyses glycolate + NADP(+) = glyoxylate + NADPH + H(+). It catalyses the reaction (R)-glycerate + NAD(+) = 3-hydroxypyruvate + NADH + H(+). The catalysed reaction is (R)-glycerate + NADP(+) = 3-hydroxypyruvate + NADPH + H(+). Catalyzes the NADPH-dependent reduction of glyoxylate and hydroxypyruvate into glycolate and glycerate, respectively. This chain is Glyoxylate/hydroxypyruvate reductase B, found in Salmonella choleraesuis (strain SC-B67).